Here is a 369-residue protein sequence, read N- to C-terminus: Anhydro-N-acetylmuramic acid kinase (369 aa).

12–19 (GTSLDGVD) lines the ATP pocket.

It belongs to the anhydro-N-acetylmuramic acid kinase family.

It catalyses the reaction 1,6-anhydro-N-acetyl-beta-muramate + ATP + H2O = N-acetyl-D-muramate 6-phosphate + ADP + H(+). It functions in the pathway amino-sugar metabolism; 1,6-anhydro-N-acetylmuramate degradation. It participates in cell wall biogenesis; peptidoglycan recycling. Catalyzes the specific phosphorylation of 1,6-anhydro-N-acetylmuramic acid (anhMurNAc) with the simultaneous cleavage of the 1,6-anhydro ring, generating MurNAc-6-P. Is required for the utilization of anhMurNAc either imported from the medium or derived from its own cell wall murein, and thus plays a role in cell wall recycling. In Escherichia coli O7:K1 (strain IAI39 / ExPEC), this protein is Anhydro-N-acetylmuramic acid kinase.